We begin with the raw amino-acid sequence, 673 residues long: Clotting factor G alpha subunit (673 aa).

The N-terminal stretch at 1 to 19 (MLVLLCCVVLHVGVARICC) is a signal peptide. One can recognise a GH16 domain in the interval 27-257 (LVWSDEFTNG…YVRVYQDAST (231 aa)). Glu-137 (nucleophile) is an active-site residue. Catalysis depends on Glu-142, which acts as the Proton donor. An N-linked (GlcNAc...) asparagine glycan is attached at Asn-186. One can recognise a Ricin B-type lectin domain in the interval 266–404 (LDGYYFVQNR…NQLSGQWKLI (139 aa)). CBM6 domains are found at residues 411-533 (KLIQ…IKIT) and 549-671 (KLIQ…IRIT).

This sequence belongs to the glycosyl hydrolase 16 family. As to quaternary structure, clotting factor G is a heterodimer composed of two non-covalently associated subunits, alpha and beta. Post-translationally, in presence of (1-&gt;3)-beta-glucan, proteolytically cleaved into a 55kDa and a 17kDa forms. In terms of tissue distribution, expressed in hemocytes (at protein level).

In terms of biological role, component of the heterodimer clotting factor G which may play a role in defense mechanisms against fungi. Initiates a (1-&gt;3)-beta-glucan-sensing clotting pathway whereby the alpha subunit binds to glucans containing (1-&gt;3)-beta linkages, which are components of the fungal cell wall, and the beta subunit catalyzes the activation of proclotting enzyme. The polypeptide is Clotting factor G alpha subunit (Tachypleus tridentatus (Japanese horseshoe crab)).